We begin with the raw amino-acid sequence, 129 residues long: Small ribosomal subunit protein uS11c (129 aa).

Belongs to the universal ribosomal protein uS11 family. Part of the 30S ribosomal subunit.

It localises to the plastid. The protein resides in the chloroplast. This Rhodomonas salina (Cryptomonas salina) protein is Small ribosomal subunit protein uS11c.